A 253-amino-acid chain; its full sequence is Imidazole glycerol phosphate synthase subunit HisF (253 aa).

Active-site residues include D11 and D130.

This sequence belongs to the HisA/HisF family. As to quaternary structure, heterodimer of HisH and HisF.

The protein localises to the cytoplasm. It catalyses the reaction 5-[(5-phospho-1-deoxy-D-ribulos-1-ylimino)methylamino]-1-(5-phospho-beta-D-ribosyl)imidazole-4-carboxamide + L-glutamine = D-erythro-1-(imidazol-4-yl)glycerol 3-phosphate + 5-amino-1-(5-phospho-beta-D-ribosyl)imidazole-4-carboxamide + L-glutamate + H(+). It participates in amino-acid biosynthesis; L-histidine biosynthesis; L-histidine from 5-phospho-alpha-D-ribose 1-diphosphate: step 5/9. IGPS catalyzes the conversion of PRFAR and glutamine to IGP, AICAR and glutamate. The HisF subunit catalyzes the cyclization activity that produces IGP and AICAR from PRFAR using the ammonia provided by the HisH subunit. This chain is Imidazole glycerol phosphate synthase subunit HisF, found in Clostridium botulinum (strain 657 / Type Ba4).